A 437-amino-acid polypeptide reads, in one-letter code: Glutamate-1-semialdehyde 2,1-aminomutase (437 aa).

The residue at position 273 (lysine 273) is an N6-(pyridoxal phosphate)lysine.

This sequence belongs to the class-III pyridoxal-phosphate-dependent aminotransferase family. HemL subfamily. As to quaternary structure, homodimer. The cofactor is pyridoxal 5'-phosphate.

The protein resides in the cytoplasm. The enzyme catalyses (S)-4-amino-5-oxopentanoate = 5-aminolevulinate. The protein operates within porphyrin-containing compound metabolism; protoporphyrin-IX biosynthesis; 5-aminolevulinate from L-glutamyl-tRNA(Glu): step 2/2. The protein is Glutamate-1-semialdehyde 2,1-aminomutase of Chlamydia abortus (strain DSM 27085 / S26/3) (Chlamydophila abortus).